Consider the following 202-residue polypeptide: FMN reductase (NADH) RutF 1 (202 aa).

Residues 168–202 (PRTPRSGSAPAEPARAPRAVGARPAEGPALALRSA) are disordered. A compositionally biased stretch (low complexity) spans 171–196 (PRSGSAPAEPARAPRAVGARPAEGPA).

Belongs to the non-flavoprotein flavin reductase family. RutF subfamily.

It catalyses the reaction FMNH2 + NAD(+) = FMN + NADH + 2 H(+). Functionally, catalyzes the reduction of FMN to FMNH2 which is used to reduce pyrimidine by RutA via the Rut pathway. The sequence is that of FMN reductase (NADH) RutF 1 from Methylorubrum extorquens (strain PA1) (Methylobacterium extorquens).